The primary structure comprises 404 residues: Pleckstrin homology domain-containing family A member 1 (404 aa).

2 consecutive PH domains span residues 7–112 (QNRI…KAIK) and 191–289 (AVIK…GAIV). 2 disordered regions span residues 291-332 (QRGP…RSNS) and 355-404 (NFKV…VSDV). Residues 316–332 (TNAATATSHSTASRSNS) are compositionally biased toward low complexity. Residues serine 332 and serine 362 each carry the phosphoserine modification.

In terms of assembly, interacts with MPDZ and PTPN13. In terms of tissue distribution, highly expressed in skeletal muscle, thymus, pancreas, placenta and lung. Detected at low levels in brain, heart, peripheral blood leukocytes, testis, ovary, spinal cord, thyroid, kidney, liver, small intestine and colon.

Its subcellular location is the cytoplasm. It is found in the cell membrane. The protein localises to the nucleus. Binds specifically to phosphatidylinositol 3,4-diphosphate (PtdIns3,4P2), but not to other phosphoinositides. May recruit other proteins to the plasma membrane. The polypeptide is Pleckstrin homology domain-containing family A member 1 (PLEKHA1) (Homo sapiens (Human)).